The sequence spans 353 residues: Photosystem II protein D1 (353 aa).

Position 2 is an N-acetylthreonine (Thr-2). Thr-2 bears the Phosphothreonine mark. A run of 3 helical transmembrane segments spans residues 29–46 (YIGW…TATS), 118–133 (HFLL…EWEL), and 142–156 (WIAV…AATA). His-118 serves as a coordination point for chlorophyll a. Tyr-126 contacts pheophytin a. Positions 170 and 189 each coordinate [CaMn4O5] cluster. Residues 197–218 (FHMLGVAGVFGGSLFSAMHGSL) traverse the membrane as a helical segment. Chlorophyll a is bound at residue His-198. Residues His-215 and 264-265 (SF) contribute to the a quinone site. His-215 serves as a coordination point for Fe cation. His-272 is a Fe cation binding site. A helical membrane pass occupies residues 274 to 288 (FLAAWPVVGIWFTAL). His-332, Glu-333, Asp-342, and Ala-344 together coordinate [CaMn4O5] cluster. Residues 345–353 (AIEAPSTNG) constitute a propeptide that is removed on maturation.

The protein belongs to the reaction center PufL/M/PsbA/D family. PSII is composed of 1 copy each of membrane proteins PsbA, PsbB, PsbC, PsbD, PsbE, PsbF, PsbH, PsbI, PsbJ, PsbK, PsbL, PsbM, PsbT, PsbX, PsbY, PsbZ, Psb30/Ycf12, at least 3 peripheral proteins of the oxygen-evolving complex and a large number of cofactors. It forms dimeric complexes. It depends on The D1/D2 heterodimer binds P680, chlorophylls that are the primary electron donor of PSII, and subsequent electron acceptors. It shares a non-heme iron and each subunit binds pheophytin, quinone, additional chlorophylls, carotenoids and lipids. D1 provides most of the ligands for the Mn4-Ca-O5 cluster of the oxygen-evolving complex (OEC). There is also a Cl(-1) ion associated with D1 and D2, which is required for oxygen evolution. The PSII complex binds additional chlorophylls, carotenoids and specific lipids. as a cofactor. In terms of processing, tyr-161 forms a radical intermediate that is referred to as redox-active TyrZ, YZ or Y-Z. C-terminally processed by CTPA; processing is essential to allow assembly of the oxygen-evolving complex and thus photosynthetic growth.

The protein resides in the plastid. Its subcellular location is the chloroplast thylakoid membrane. It carries out the reaction 2 a plastoquinone + 4 hnu + 2 H2O = 2 a plastoquinol + O2. In terms of biological role, photosystem II (PSII) is a light-driven water:plastoquinone oxidoreductase that uses light energy to abstract electrons from H(2)O, generating O(2) and a proton gradient subsequently used for ATP formation. It consists of a core antenna complex that captures photons, and an electron transfer chain that converts photonic excitation into a charge separation. The D1/D2 (PsbA/PsbD) reaction center heterodimer binds P680, the primary electron donor of PSII as well as several subsequent electron acceptors. This is Photosystem II protein D1 from Gossypium barbadense (Sea Island cotton).